Reading from the N-terminus, the 473-residue chain is UDP-N-acetylmuramate--L-alanine ligase (473 aa).

119–125 provides a ligand contact to ATP; the sequence is GTHGKTT.

This sequence belongs to the MurCDEF family.

The protein resides in the cytoplasm. The catalysed reaction is UDP-N-acetyl-alpha-D-muramate + L-alanine + ATP = UDP-N-acetyl-alpha-D-muramoyl-L-alanine + ADP + phosphate + H(+). Its pathway is cell wall biogenesis; peptidoglycan biosynthesis. Cell wall formation. The protein is UDP-N-acetylmuramate--L-alanine ligase of Caulobacter vibrioides (strain NA1000 / CB15N) (Caulobacter crescentus).